The sequence spans 238 residues: Peptidyl-tRNA hydrolase (238 aa).

Tyrosine 14 contacts tRNA. Histidine 19 functions as the Proton acceptor in the catalytic mechanism. TRNA-binding residues include phenylalanine 64, asparagine 66, and asparagine 112. Residues lysine 190–threonine 202 are compositionally biased toward basic and acidic residues. Residues lysine 190–methionine 225 form a disordered region. Over residues valine 203–arginine 212 the composition is skewed to basic residues.

The protein belongs to the PTH family. As to quaternary structure, monomer.

It localises to the cytoplasm. The catalysed reaction is an N-acyl-L-alpha-aminoacyl-tRNA + H2O = an N-acyl-L-amino acid + a tRNA + H(+). Hydrolyzes ribosome-free peptidyl-tRNAs (with 1 or more amino acids incorporated), which drop off the ribosome during protein synthesis, or as a result of ribosome stalling. Its function is as follows. Catalyzes the release of premature peptidyl moieties from peptidyl-tRNA molecules trapped in stalled 50S ribosomal subunits, and thus maintains levels of free tRNAs and 50S ribosomes. This is Peptidyl-tRNA hydrolase from Rhizobium rhizogenes (strain K84 / ATCC BAA-868) (Agrobacterium radiobacter).